Consider the following 203-residue polypeptide: Ribosomal RNA large subunit methyltransferase E (203 aa).

Residues Gly-51, Trp-53, Asp-69, Asp-85, and Asp-108 each contribute to the S-adenosyl-L-methionine site. The active-site Proton acceptor is Lys-148.

Belongs to the class I-like SAM-binding methyltransferase superfamily. RNA methyltransferase RlmE family.

Its subcellular location is the cytoplasm. The catalysed reaction is uridine(2552) in 23S rRNA + S-adenosyl-L-methionine = 2'-O-methyluridine(2552) in 23S rRNA + S-adenosyl-L-homocysteine + H(+). In terms of biological role, specifically methylates the uridine in position 2552 of 23S rRNA at the 2'-O position of the ribose in the fully assembled 50S ribosomal subunit. This Methanosphaerula palustris (strain ATCC BAA-1556 / DSM 19958 / E1-9c) protein is Ribosomal RNA large subunit methyltransferase E.